The following is a 305-amino-acid chain: Glycine--tRNA ligase alpha subunit (305 aa).

It belongs to the class-II aminoacyl-tRNA synthetase family. In terms of assembly, tetramer of two alpha and two beta subunits.

The protein resides in the cytoplasm. It catalyses the reaction tRNA(Gly) + glycine + ATP = glycyl-tRNA(Gly) + AMP + diphosphate. This is Glycine--tRNA ligase alpha subunit from Janthinobacterium sp. (strain Marseille) (Minibacterium massiliensis).